A 1940-amino-acid chain; its full sequence is Myosin-2 (1940 aa).

The 50-residue stretch at 33–82 (DAKTSVFVAEPKESFVKGTVQSREGGKVTVKTEAGATLTVKEDQVFPMNP) folds into the Myosin N-terminal SH3-like domain. T64 and T69 each carry phosphothreonine. One can recognise a Myosin motor domain in the interval 86–783 (DKIEDMAMMT…LLGLLEEMRD (698 aa)). K130 is subject to N6,N6,N6-trimethyllysine. 179–186 (GESGAGKT) is a binding site for ATP. The residue at position 389 (Y389) is a Phosphotyrosine. S392 is subject to Phosphoserine. Residue T419 is modified to Phosphothreonine. S625 is modified (phosphoserine). The segment at 660-682 (LNKLMTNLRSTHPHFVRCIIPNE) is actin-binding. H758 carries the pros-methylhistidine modification. Residues 762–776 (KFGHTKVFFKAGLLG) form an actin-binding region. The region spanning 786–815 (LAQLITRTQARCRGFLARVEYQKMVERRES) is the IQ domain. Residues 844 to 1940 (LLKSAETEKE…EVHTKVISEE (1097 aa)) are a coiled coil. Phosphoserine is present on residues S1093, S1097, S1163, and S1238. Positions 1154 to 1173 (RLEEAGGATSAQIEMNKKRE) are disordered. T1242 is subject to Phosphothreonine. S1244 bears the Phosphoserine mark. T1256 is modified (phosphothreonine). S1262 is subject to Phosphoserine. A Phosphothreonine modification is found at T1287. A phosphoserine mark is found at S1289, S1293, S1304, and S1307. Y1465 is subject to Phosphotyrosine. T1468 is subject to Phosphothreonine. S1475 bears the Phosphoserine mark. Phosphotyrosine is present on Y1493. S1496 carries the phosphoserine modification. A Phosphothreonine modification is found at T1502. S1515 carries the post-translational modification Phosphoserine. T1518 carries the post-translational modification Phosphothreonine. Phosphoserine is present on residues S1543, S1555, S1575, S1601, S1715, and S1727. T1731 and T1737 each carry phosphothreonine. S1740 carries the phosphoserine modification. Residues 1884–1920 (KRQAEEAEEQSNTNLSKFRKLQHELEEAEERADIAES) form a disordered region.

This sequence belongs to the TRAFAC class myosin-kinesin ATPase superfamily. Myosin family. Muscle myosin is a hexameric protein that consists of 2 heavy chain subunits (MHC), 2 alkali light chain subunits (MLC) and 2 regulatory light chain subunits (MLC-2). Interacts with GCSAM.

It localises to the cytoplasm. It is found in the myofibril. Functionally, myosins are actin-based motor molecules with ATPase activity essential for muscle contraction. This is Myosin-2 (MYH2) from Canis lupus familiaris (Dog).